The chain runs to 459 residues: tRNA modification GTPase MnmE (459 aa).

Residues arginine 20, glutamate 85, and arginine 124 each coordinate (6S)-5-formyl-5,6,7,8-tetrahydrofolate. Residues 221-380 form the TrmE-type G domain; sequence GISTVIIGRP…LEEAIQSLFF (160 aa). Asparagine 231 provides a ligand contact to K(+). GTP contacts are provided by residues 231–236, 250–256, and 275–278; these read NVGKSS, TDIPGTT, and DTAG. Serine 235 serves as a coordination point for Mg(2+). Residues threonine 250, isoleucine 252, and threonine 255 each coordinate K(+). Threonine 256 is a binding site for Mg(2+). Lysine 459 is a (6S)-5-formyl-5,6,7,8-tetrahydrofolate binding site.

This sequence belongs to the TRAFAC class TrmE-Era-EngA-EngB-Septin-like GTPase superfamily. TrmE GTPase family. In terms of assembly, homodimer. Heterotetramer of two MnmE and two MnmG subunits. K(+) is required as a cofactor.

The protein resides in the cytoplasm. Exhibits a very high intrinsic GTPase hydrolysis rate. Involved in the addition of a carboxymethylaminomethyl (cmnm) group at the wobble position (U34) of certain tRNAs, forming tRNA-cmnm(5)s(2)U34. This chain is tRNA modification GTPase MnmE, found in Bacillus licheniformis (strain ATCC 14580 / DSM 13 / JCM 2505 / CCUG 7422 / NBRC 12200 / NCIMB 9375 / NCTC 10341 / NRRL NRS-1264 / Gibson 46).